A 325-amino-acid polypeptide reads, in one-letter code: Intelectin-2 (325 aa).

A signal peptide spans 1-26 (MLSMLRTMTRLCFLLFFSVATSGCSA). Residues 44 to 267 (FSFSSLPRSC…AANALCAGIK (224 aa)) form the Fibrinogen C-terminal domain. A disulfide bridge connects residues Cys-53 and Cys-82. His-98, Glu-99, Asp-101, Gly-104, Gly-109, Asp-110, and Asp-145 together coordinate Ca(2+). 3 cysteine pairs are disulfide-bonded: Cys-106-Cys-292, Cys-211-Cys-271, and Cys-263-Cys-277. Residues Asn-272, Glu-274, and Asp-294 each contribute to the Ca(2+) site. Residue 274 to 275 (EH) coordinates a carbohydrate.

In terms of tissue distribution, expressed only in the small intestine.

The protein resides in the secreted. In terms of biological role, may play a role in the defense system against pathogens. This is Intelectin-2 (ITLN2) from Homo sapiens (Human).